The primary structure comprises 173 residues: MIDSDGFRANVGIIICNRFGQVMWARRFGQHSWQFPQGGVDDGESAEEAMYRELYEEVGLKPEHVQILTSTRSWLRYRLPKRLIRQDSKPVCIGQKQKWFLLQLKSAETAIDLNASGHPEFDDWRWVSYWYPVRQVVSFKRDVYRKVMKEFAVTTLPLQVKESNNRRRGMRRS.

The Nudix hydrolase domain occupies 6-149 (GFRANVGIII…KRDVYRKVMK (144 aa)). Residues 38-59 (GGVDDGESAEEAMYRELYEEVG) carry the Nudix box motif.

This sequence belongs to the Nudix hydrolase family. RppH subfamily. A divalent metal cation serves as cofactor.

In terms of biological role, accelerates the degradation of transcripts by removing pyrophosphate from the 5'-end of triphosphorylated RNA, leading to a more labile monophosphorylated state that can stimulate subsequent ribonuclease cleavage. The chain is RNA pyrophosphohydrolase from Shewanella pealeana (strain ATCC 700345 / ANG-SQ1).